The primary structure comprises 117 residues: Large ribosomal subunit protein bL20 (117 aa).

The protein belongs to the bacterial ribosomal protein bL20 family.

Its function is as follows. Binds directly to 23S ribosomal RNA and is necessary for the in vitro assembly process of the 50S ribosomal subunit. It is not involved in the protein synthesizing functions of that subunit. This is Large ribosomal subunit protein bL20 from Campylobacter jejuni subsp. jejuni serotype O:6 (strain 81116 / NCTC 11828).